A 113-amino-acid polypeptide reads, in one-letter code: Large ribosomal subunit protein uL22 (113 aa).

Belongs to the universal ribosomal protein uL22 family. Part of the 50S ribosomal subunit.

Functionally, this protein binds specifically to 23S rRNA; its binding is stimulated by other ribosomal proteins, e.g. L4, L17, and L20. It is important during the early stages of 50S assembly. It makes multiple contacts with different domains of the 23S rRNA in the assembled 50S subunit and ribosome. The globular domain of the protein is located near the polypeptide exit tunnel on the outside of the subunit, while an extended beta-hairpin is found that lines the wall of the exit tunnel in the center of the 70S ribosome. In Bacillus mycoides (strain KBAB4) (Bacillus weihenstephanensis), this protein is Large ribosomal subunit protein uL22.